Here is a 962-residue protein sequence, read N- to C-terminus: Glycine dehydrogenase (decarboxylating) (962 aa).

The residue at position 709 (K709) is an N6-(pyridoxal phosphate)lysine.

It belongs to the GcvP family. In terms of assembly, the glycine cleavage system is composed of four proteins: P, T, L and H. The cofactor is pyridoxal 5'-phosphate.

It carries out the reaction N(6)-[(R)-lipoyl]-L-lysyl-[glycine-cleavage complex H protein] + glycine + H(+) = N(6)-[(R)-S(8)-aminomethyldihydrolipoyl]-L-lysyl-[glycine-cleavage complex H protein] + CO2. In terms of biological role, the glycine cleavage system catalyzes the degradation of glycine. The P protein binds the alpha-amino group of glycine through its pyridoxal phosphate cofactor; CO(2) is released and the remaining methylamine moiety is then transferred to the lipoamide cofactor of the H protein. In Shewanella frigidimarina (strain NCIMB 400), this protein is Glycine dehydrogenase (decarboxylating).